The primary structure comprises 54 residues: Zinc-containing ferredoxin A (54 aa).

Positions 1-21 (GIDPNYRTSRPEVGTHEGHKV) are disordered. Positions 1 to 36 (GIDPNYRTSRPEVGTHEGHKVYGPVENPKVLGIHGA) are N-terminal extension. Positions 9 to 20 (SRPEVGTHEGHK) are enriched in basic and acidic residues. Zn(2+) contacts are provided by histidine 16 and histidine 19. Lysine 29 carries the post-translational modification N6-methyllysine. Histidine 34 provides a ligand contact to Zn(2+). Residues 35–54 (GAIVGVDFDLCIADGSCINA) form the 4Fe-4S ferredoxin-type 1 domain. [3Fe-4S] cluster contacts are provided by cysteine 45 and cysteine 51.

The cofactor is [3Fe-4S] cluster. [4Fe-4S] cluster serves as cofactor. Requires Zn(2+) as cofactor.

In terms of biological role, ferredoxins are iron-sulfur proteins that transfer electrons in a wide variety of metabolic reactions. The protein is Zinc-containing ferredoxin A (zfx) of Sulfuracidifex metallicus (Sulfolobus metallicus).